Consider the following 235-residue polypeptide: Rab-like protein 3 (235 aa).

The interval 1-235 (MASLDRVKVL…GGNFKSLHYD (235 aa)) is small GTPase-like. GTP contacts are provided by residues 16 to 21 (GVGKSS), 148 to 150 (KLD), and 179 to 180 (DC).

The protein belongs to the small GTPase superfamily. Rab family. As to quaternary structure, homodimer.

Required for KRAS signaling regulation and modulation of cell proliferation. Regulator of KRAS prenylation, and probably prenylation of other small GTPases. Required for lymphocyte development and function. Not required for myeloid cell development. This is Rab-like protein 3 (rabl3) from Xenopus laevis (African clawed frog).